We begin with the raw amino-acid sequence, 294 residues long: MKTKIIVIVGPTAVGKTALSIEVAKAFNGQIISGDSQQVYRGLNIGTAKIRPEEQEGISHYLLDVRDVGESYSAYDFVTEATQAIREIEAQGQLPIICGGTGLYIQSLLEGYHLGGSVPHEEILAYRAQLDSWSDEDLFGKIAELGIEIPQINRRRAMRALEIAHLGGQLENNLPDYEALLICLDDKREKLYERINQRVDLMIEDGLLEEARWLFDKAPTSQASKGIGYKELFPYFAGQVSLEEAVDKLKQNTRRFAKRQLTWFRNRMSVTFYQVGNPDYKNQVMEDIKNFLDK.

10–17 (GPTAVGKT) serves as a coordination point for ATP. 12 to 17 (TAVGKT) lines the substrate pocket. The interaction with substrate tRNA stretch occupies residues 35–38 (DSQQ).

It belongs to the IPP transferase family. Monomer. The cofactor is Mg(2+).

It catalyses the reaction adenosine(37) in tRNA + dimethylallyl diphosphate = N(6)-dimethylallyladenosine(37) in tRNA + diphosphate. Catalyzes the transfer of a dimethylallyl group onto the adenine at position 37 in tRNAs that read codons beginning with uridine, leading to the formation of N6-(dimethylallyl)adenosine (i(6)A). This chain is tRNA dimethylallyltransferase, found in Streptococcus gordonii (strain Challis / ATCC 35105 / BCRC 15272 / CH1 / DL1 / V288).